A 318-amino-acid polypeptide reads, in one-letter code: Acetyl-coenzyme A carboxylase carboxyl transferase subunit alpha (318 aa).

Positions 41 to 295 constitute a CoA carboxyltransferase C-terminal domain; sequence RLTTKSQELT…KRQLIADLGS (255 aa).

It belongs to the AccA family. Acetyl-CoA carboxylase is a heterohexamer composed of biotin carboxyl carrier protein (AccB), biotin carboxylase (AccC) and two subunits each of ACCase subunit alpha (AccA) and ACCase subunit beta (AccD).

The protein resides in the cytoplasm. The catalysed reaction is N(6)-carboxybiotinyl-L-lysyl-[protein] + acetyl-CoA = N(6)-biotinyl-L-lysyl-[protein] + malonyl-CoA. It functions in the pathway lipid metabolism; malonyl-CoA biosynthesis; malonyl-CoA from acetyl-CoA: step 1/1. Its function is as follows. Component of the acetyl coenzyme A carboxylase (ACC) complex. First, biotin carboxylase catalyzes the carboxylation of biotin on its carrier protein (BCCP) and then the CO(2) group is transferred by the carboxyltransferase to acetyl-CoA to form malonyl-CoA. This chain is Acetyl-coenzyme A carboxylase carboxyl transferase subunit alpha, found in Idiomarina loihiensis (strain ATCC BAA-735 / DSM 15497 / L2-TR).